Here is a 148-residue protein sequence, read N- to C-terminus: Transcriptional repressor NrdR (148 aa).

A zinc finger spans residues 3 to 34 (CPFCHNEDTQVLDTRVSDEGDTIRRRRRCAKC). The ATP-cone domain occupies 49-139 (PAIVKKNGSR…VYRSFADIES (91 aa)).

Belongs to the NrdR family. Requires Zn(2+) as cofactor.

Negatively regulates transcription of bacterial ribonucleotide reductase nrd genes and operons by binding to NrdR-boxes. This Polynucleobacter necessarius subsp. necessarius (strain STIR1) protein is Transcriptional repressor NrdR.